Here is a 333-residue protein sequence, read N- to C-terminus: L-lactate dehydrogenase B chain (333 aa).

NAD(+) is bound by residues 29-57 (GQVG…LEDK) and Arg-99. Arg-106, Asn-138, and Arg-169 together coordinate substrate. Asn-138 contributes to the NAD(+) binding site. His-193 serves as the catalytic Proton acceptor. A substrate-binding site is contributed by Thr-248.

It belongs to the LDH/MDH superfamily. LDH family. As to quaternary structure, homotetramer.

It localises to the cytoplasm. It carries out the reaction (S)-lactate + NAD(+) = pyruvate + NADH + H(+). It functions in the pathway fermentation; pyruvate fermentation to lactate; (S)-lactate from pyruvate: step 1/1. In terms of biological role, interconverts simultaneously and stereospecifically pyruvate and lactate with concomitant interconversion of NADH and NAD(+). This is L-lactate dehydrogenase B chain (LDHB) from Anas platyrhynchos (Mallard).